We begin with the raw amino-acid sequence, 254 residues long: MTFKGFDKDFNITDKVAVVTGAASGIGKAMAELFSEKGAYVVLLDIKEDVKDVAAQINPSRTLALQVDITKKENIEKVVAEIKKVYPKIDILANSAGVALLEKAEDLPEEYWDKTMELNLKGSFLMAQIIGREMIATGGGKIVNMASQASVIALDKHVAYCASKAAIVSMTQVLAMEWAPYNINVNAISPTVILTELGKKAWAGQVGEDMKKLIPAGRFGYPEEVAACALFLVSDAASLITGENLIIDGGYTIK.

18-47 (VVTGAASGIGKAMAELFSEKGAYVVLLDIK) serves as a coordination point for NAD(+). Catalysis depends on tyrosine 160, which acts as the Proton acceptor. Lysine 164 lines the NAD(+) pocket.

This sequence belongs to the short-chain dehydrogenases/reductases (SDR) family. It depends on Mg(2+) as a cofactor. Requires Mn(2+) as cofactor.

Its subcellular location is the cytoplasm. The catalysed reaction is glycerol + NAD(+) = dihydroxyacetone + NADH + H(+). With respect to regulation, inhibited by Zn(2+). Its function is as follows. Involved in the glycerol metabolism. Catalyzes the NAD-dependent oxidation of glycerol to dihydroxyacetone (glycerone). GolD specifically uses NAD. The polypeptide is NAD-dependent glycerol dehydrogenase (Listeria innocua serovar 6a (strain ATCC BAA-680 / CLIP 11262)).